The primary structure comprises 1207 residues: Chromosomal serine/threonine-protein kinase JIL-1 (1207 aa).

A compositionally biased stretch (polar residues) spans 1-19; it reads MSRLQKQNYEILSGTSTSR. 3 disordered regions span residues 1–119, 164–183, and 210–230; these read MSRL…ASAR, QDME…SSSL, and SSST…LDLD. Phosphoserine occurs at positions 29 and 31. A compositionally biased stretch (polar residues) spans 45–69; it reads LNGQLVANGNGKTRKNSNSETMTNG. Residues 88 to 97 show a composition bias toward low complexity; the sequence is NYNNNNNNNN. Positions 98–108 are enriched in polar residues; the sequence is SISATNGQYTN. Over residues 109 to 118 the composition is skewed to low complexity; that stretch reads SSSKTTSASA. Residues 164–178 show a composition bias toward acidic residues; that stretch reads QDMEEDEPNGIEIDE. A compositionally biased stretch (polar residues) spans 213–226; that stretch reads TTPSYAMPTSNSTP. In terms of domain architecture, Protein kinase 1 spans 261-530; that stretch reads FKIIRVLGTG…ASEIKEHPFF (270 aa). ATP contacts are provided by residues 267–275 and lysine 293; that span reads LGTGAYGRV. The Proton acceptor role is filled by aspartate 389. The residue at position 424 (serine 424) is a Phosphoserine. The region spanning 531–599 is the AGC-kinase C-terminal domain; it reads NGINWQELRT…VAPEHLEQMR (69 aa). Threonine 588 is subject to Phosphothreonine. The 264-residue stretch at 623-886 folds into the Protein kinase 2 domain; it reads LELGTRTSNG…LSDILDSEWL (264 aa). Residues 629-637 and lysine 652 contribute to the ATP site; that span reads TSNGAYGTC. Residue aspartate 739 is the Proton acceptor of the active site. Threonine 1045 is modified (phosphothreonine). Serine 1047 carries the phosphoserine modification. The segment at 1168 to 1197 is disordered; sequence TFPRPKAQLKRTKREPKVPRPPTRVQPERA.

The protein belongs to the protein kinase superfamily. Ser/Thr protein kinase family. As to quaternary structure, interacts with lola. Interacts with proteins of the male specific lethal (MSL) dosage compensation complex; this interaction is mediated by the kinase domains. The cofactor is Mg(2+). In terms of processing, autophosphorylated in vitro.

It is found in the nucleus. It localises to the chromosome. It catalyses the reaction L-seryl-[protein] + ATP = O-phospho-L-seryl-[protein] + ADP + H(+). It carries out the reaction L-threonyl-[protein] + ATP = O-phospho-L-threonyl-[protein] + ADP + H(+). Functionally, phosphorylates 'Ser-10' of histone H3. May regulate gene expression by establishing or maintaining the structure of more open chromatin regions. Also required for normal polytene chromosome structure, for oogenesis and for viability throughout development. Regulates the structure of polytene chromosomes in salivary glands. May phosphorylate 'Ser-1' of histone H2A. This Drosophila melanogaster (Fruit fly) protein is Chromosomal serine/threonine-protein kinase JIL-1.